A 341-amino-acid chain; its full sequence is Thymidine kinase (341 aa).

19–26 (GAYGIGKT) lines the ATP pocket. E48 (proton acceptor) is an active-site residue. Residues Y66 and Q90 each coordinate substrate. ATP is bound at residue R183. R189 provides a ligand contact to substrate.

It belongs to the herpesviridae thymidine kinase family. In terms of assembly, homodimer.

It carries out the reaction thymidine + ATP = dTMP + ADP + H(+). Functionally, catalyzes the transfer of the gamma-phospho group of ATP to thymidine to generate dTMP in the salvage pathway of pyrimidine synthesis. The dTMP serves as a substrate for DNA polymerase during viral DNA replication. Allows the virus to be reactivated and to grow in non-proliferative cells lacking a high concentration of phosphorylated nucleic acid precursors. In Varicella-zoster virus (strain Oka vaccine) (HHV-3), this protein is Thymidine kinase.